The following is a 194-amino-acid chain: ATP-dependent Clp protease proteolytic subunit (194 aa).

Catalysis depends on Ser-99, which acts as the Nucleophile. The active site involves His-124.

It belongs to the peptidase S14 family. As to quaternary structure, fourteen ClpP subunits assemble into 2 heptameric rings which stack back to back to give a disk-like structure with a central cavity, resembling the structure of eukaryotic proteasomes.

It is found in the cytoplasm. It catalyses the reaction Hydrolysis of proteins to small peptides in the presence of ATP and magnesium. alpha-casein is the usual test substrate. In the absence of ATP, only oligopeptides shorter than five residues are hydrolyzed (such as succinyl-Leu-Tyr-|-NHMec, and Leu-Tyr-Leu-|-Tyr-Trp, in which cleavage of the -Tyr-|-Leu- and -Tyr-|-Trp bonds also occurs).. Its function is as follows. Cleaves peptides in various proteins in a process that requires ATP hydrolysis. Has a chymotrypsin-like activity. Plays a major role in the degradation of misfolded proteins. The protein is ATP-dependent Clp protease proteolytic subunit of Borrelia garinii subsp. bavariensis (strain ATCC BAA-2496 / DSM 23469 / PBi) (Borreliella bavariensis).